Reading from the N-terminus, the 283-residue chain is Pantothenate synthetase (283 aa).

30-37 (MGCLHEGH) lines the ATP pocket. The Proton donor role is filled by H37. Q61 contacts (R)-pantoate. Beta-alanine is bound at residue Q61. ATP is bound at residue 147 to 150 (GQKD). Q153 provides a ligand contact to (R)-pantoate. ATP is bound by residues V176 and 184–187 (KSSR).

The protein belongs to the pantothenate synthetase family. In terms of assembly, homodimer.

The protein localises to the cytoplasm. The enzyme catalyses (R)-pantoate + beta-alanine + ATP = (R)-pantothenate + AMP + diphosphate + H(+). The protein operates within cofactor biosynthesis; (R)-pantothenate biosynthesis; (R)-pantothenate from (R)-pantoate and beta-alanine: step 1/1. Its function is as follows. Catalyzes the condensation of pantoate with beta-alanine in an ATP-dependent reaction via a pantoyl-adenylate intermediate. This Clostridium novyi (strain NT) protein is Pantothenate synthetase.